We begin with the raw amino-acid sequence, 2381 residues long: Nipped-B-like protein A (2381 aa).

An HEAT 1 repeat occupies 85–124; that stretch reads SDELEGDVPVLLQLLMSRNPNIFRNKTAPNTPQYPAQAGI. Disordered stretches follow at residues 131–211, 240–289, and 329–503; these read PPYK…HLQQ, HLLQ…DIVG, and LAAI…ELPP. Polar residues predominate over residues 138–158; that stretch reads GSMQGSPASANYQQASMSHSP. Composition is skewed to basic and acidic residues over residues 254–273 and 333–355; these read GTKDLHLGSQDKQRGQKSSE and ERMESEAAMETERSAKEVQDKDK. The segment covering 373-389 has biased composition (gly residues); that stretch reads GTAGSGSGAPGGGGGAN. Positions 451–473 are enriched in basic and acidic residues; it reads VKHEHDHDPEHPHYDDKQPDTPR. A PxVxL motif motif is present at residues 552-565; the sequence is KKSVKPVVVLQKLS. Residues 570-580 are compositionally biased toward basic and acidic residues; sequence QRLMRERDSRA. 2 disordered regions span residues 570 to 604 and 629 to 708; these read QRLMRERDSRASKSGKNRLSSGRSGKGGIDPSVLK and RKRS…NEVA. The span at 581 to 592 shows a compositional bias: polar residues; that stretch reads SKSGKNRLSSGR. Basic and acidic residues-rich tracts occupy residues 633 to 642 and 658 to 694; these read TVNERPKYAE and KDRDRTWEAEERDRRSSGEHRRGNFDARRGSGSRYDD. HEAT repeat units lie at residues 1299-1337, 1375-1413, 1477-1516, and 1843-1881; these read SQSFDIYLTQILRVLGESAIAVRTKAMKCLSEVVAVDPS, PQLTEQYYDMLIERILDTGISVRKRVIKILRDICLEQPN, YDWFEQLLQNLLKSEEDSSYKPTRKACVQLVDNLVEHILK, and LIHPVQCVPYLIAMGTDAEPTMRNKADQQLVEIDKKYTG. Disordered regions lie at residues 2005–2095 and 2228–2271; these read IPGR…DLDD and LLGG…GDSA. The span at 2006-2021 shows a compositional bias: basic residues; sequence PGRKSRKRRRRRRRPQ. Positions 2040–2056 are enriched in basic and acidic residues; sequence EEERGAQDEERERHSGD. The span at 2057 to 2068 shows a compositional bias: acidic residues; sequence EEYDDDDYEEDE. A compositionally biased stretch (basic and acidic residues) spans 2077–2086; the sequence is KPTEDIRQSE.

The protein belongs to the SCC2/Nipped-B family.

It is found in the nucleus. Its function is as follows. May play a structural role in chromatin. Involved in sister chromatid cohesion, possibly by facilitating the cohesin complex loading. Transcription factor, which may promote cortical neuron migration during brain development by regulating the transcription of crucial genes in this process. The protein is Nipped-B-like protein A (nipbla) of Danio rerio (Zebrafish).